A 629-amino-acid polypeptide reads, in one-letter code: Hemocyanin C chain (629 aa).

Residues H175, H179, H206, H326, H330, and H366 each coordinate Cu cation. Residue N451 is glycosylated (N-linked (GlcNAc...) asparagine). Cysteines 537 and 585 form a disulfide. N618 is a glycosylation site (N-linked (GlcNAc...) asparagine).

This sequence belongs to the tyrosinase family. Hemocyanin subfamily. In terms of assembly, tarantula hemocyanin is a 24-chain polymer with seven different chains identified. In terms of tissue distribution, hemolymph.

It is found in the secreted. It localises to the extracellular space. Functionally, hemocyanins are copper-containing oxygen carriers occurring freely dissolved in the hemolymph of many mollusks and arthropods. The protein is Hemocyanin C chain (HCC) of Aphonopelma sp. (American tarantula).